A 172-amino-acid polypeptide reads, in one-letter code: S-ribosylhomocysteine lyase (172 aa).

His54, His58, and Cys128 together coordinate Fe cation.

It belongs to the LuxS family. In terms of assembly, homodimer. It depends on Fe cation as a cofactor.

It carries out the reaction S-(5-deoxy-D-ribos-5-yl)-L-homocysteine = (S)-4,5-dihydroxypentane-2,3-dione + L-homocysteine. Involved in the synthesis of autoinducer 2 (AI-2) which is secreted by bacteria and is used to communicate both the cell density and the metabolic potential of the environment. The regulation of gene expression in response to changes in cell density is called quorum sensing. Catalyzes the transformation of S-ribosylhomocysteine (RHC) to homocysteine (HC) and 4,5-dihydroxy-2,3-pentadione (DPD). The polypeptide is S-ribosylhomocysteine lyase (Vibrio atlanticus (strain LGP32) (Vibrio splendidus (strain Mel32))).